We begin with the raw amino-acid sequence, 132 residues long: Small ribosomal subunit protein uS12 (132 aa).

Asp-89 is modified (3-methylthioaspartic acid).

It belongs to the universal ribosomal protein uS12 family. Part of the 30S ribosomal subunit. Contacts proteins S8 and S17. May interact with IF1 in the 30S initiation complex.

Functionally, with S4 and S5 plays an important role in translational accuracy. In terms of biological role, interacts with and stabilizes bases of the 16S rRNA that are involved in tRNA selection in the A site and with the mRNA backbone. Located at the interface of the 30S and 50S subunits, it traverses the body of the 30S subunit contacting proteins on the other side and probably holding the rRNA structure together. The combined cluster of proteins S8, S12 and S17 appears to hold together the shoulder and platform of the 30S subunit. This chain is Small ribosomal subunit protein uS12, found in Campylobacter curvus (strain 525.92).